The chain runs to 131 residues: Small ribosomal subunit protein uS8 (131 aa).

The protein belongs to the universal ribosomal protein uS8 family. Part of the 30S ribosomal subunit. Contacts proteins S5 and S12.

One of the primary rRNA binding proteins, it binds directly to 16S rRNA central domain where it helps coordinate assembly of the platform of the 30S subunit. In Acidovorax sp. (strain JS42), this protein is Small ribosomal subunit protein uS8.